The sequence spans 80 residues: Exodeoxyribonuclease 7 small subunit (80 aa).

Belongs to the XseB family. In terms of assembly, heterooligomer composed of large and small subunits.

It localises to the cytoplasm. The catalysed reaction is Exonucleolytic cleavage in either 5'- to 3'- or 3'- to 5'-direction to yield nucleoside 5'-phosphates.. Functionally, bidirectionally degrades single-stranded DNA into large acid-insoluble oligonucleotides, which are then degraded further into small acid-soluble oligonucleotides. In Pseudomonas fluorescens (strain ATCC BAA-477 / NRRL B-23932 / Pf-5), this protein is Exodeoxyribonuclease 7 small subunit.